We begin with the raw amino-acid sequence, 581 residues long: Activating signal cointegrator 1 (581 aa).

An N-acetylalanine modification is found at Ala-2. The segment at 100–121 (DQLKRSRRKGRNKQEVPAFPEP) is disordered. The C4-type zinc finger occupies 167–219 (GRHPCDCLGQKHKLINNCLVCGRIVCEQEGSGPCLFCGSLVCTNEEQDILQRD). Residues 200–300 (CLFCGSLVCT…ASDSNQWLSK (101 aa)) are mediates interaction with DDRGK1. Ser-276 carries the post-translational modification Phosphoserine. Phosphotyrosine is present on Tyr-289. The segment at 300–400 (KVEREMLQKR…WVDNTGSTPQ (101 aa)) is mediates interaction with UFL1. Glycyl lysine isopeptide (Lys-Gly) (interchain with G-Cter in UFM1) cross-links involve residues Lys-324 and Lys-334. Over residues 390–406 (QWVDNTGSTPQKKTSLS) the composition is skewed to polar residues. The disordered stretch occupies residues 390–410 (QWVDNTGSTPQKKTSLSAGPR). Positions 437–531 (LSMHQPWASL…FQEQFPDISQ (95 aa)) constitute an ASCH domain.

In terms of assembly, interacts with the thyroid hormone receptor/TR (via the ligand-binding domain); this interaction requires the presence of thyroid hormone. Interacts with the androgen receptor/AR; in an androgen, testosterone and dihydrotestosterone-dependent manner. Interacts with ESR1 (estrogen ligand-bound); competes with UFSP2. Interacts with UFSP2; competes with ligand-bound ESR1. Interacts with DDRGK1 and UFL1; the interaction with DDRGK1 is direct. Interacts with NCOA1. Interacts with EP300. Part of the ASC-1 complex, that contains TRIP4, ASCC1, ASCC2 and ASCC3. Identified in the RQT (ribosome quality control trigger) complex, that contains ASCC2, ASCC3 and TRIP4. Interacts with NEK6. Interacts with CSRP1. Interacts with ZCCHC4. Phosphorylated by NEK6. In terms of processing, polyufmylated by the UFM1-conjugating system composed of the enzymes UBA5, UFC1 and UFL1. Deufmylated by the protease UFSP2. Ufmylation of TRIP4 is promoted by ligand-bound nuclear receptors that compete with UFSP2 for interaction with TRIP4. Nuclear receptors-induced ufmylation promotes the recruitment of additional transcriptional coactivators like EP300 and NCOA1 and therefore the assembly of a coactivator complex facilitating nuclear receptor-mediated transcription. Ubiquitously expressed. Expressed in the spinal cord, brain, paraspinal ganglia, thyroid, and submandibular glands. Expressed at low level in all the muscles (at protein level) but with higher expression in axial than in limb muscles.

It localises to the nucleus. The protein localises to the cytoplasm. It is found in the cytosol. Its subcellular location is the cytoskeleton. The protein resides in the microtubule organizing center. It localises to the centrosome. Functionally, transcription coactivator which associates with nuclear receptors, transcriptional coactivators including EP300, CREBBP and NCOA1, and basal transcription factors like TBP and TFIIA to facilitate nuclear receptors-mediated transcription. May thereby play an important role in establishing distinct coactivator complexes under different cellular conditions. Plays a role in thyroid hormone receptor and estrogen receptor transactivation. Also involved in androgen receptor transactivation. Plays a pivotal role in the transactivation of NF-kappa-B, SRF and AP1. Acts as a mediator of transrepression between nuclear receptor and either AP1 or NF-kappa-B. May play a role in the development of neuromuscular junction. May play a role in late myogenic differentiation. Also functions as part of the RQC trigger (RQT) complex that activates the ribosome quality control (RQC) pathway, a pathway that degrades nascent peptide chains during problematic translation. The chain is Activating signal cointegrator 1 from Mus musculus (Mouse).